The chain runs to 117 residues: Large ribosomal subunit protein bL19 (117 aa).

Belongs to the bacterial ribosomal protein bL19 family.

Its function is as follows. This protein is located at the 30S-50S ribosomal subunit interface and may play a role in the structure and function of the aminoacyl-tRNA binding site. In Shewanella woodyi (strain ATCC 51908 / MS32), this protein is Large ribosomal subunit protein bL19.